The sequence spans 215 residues: MSEVKGLLVMDVDSTLVQEEVIDLLGEEAGVGREVAEITERAMRGELDFRQALNERVATLKGLPDSIFEKVYARIHFNKGAKELVDELHSRGFKVGLVSGGFHETVDRLAKEAGIDYVKANHLEVIDGFLTGKVYGEIVTKDVKVAKLKDWAAENGLKLSQTIAMGDGANDLPMIKTAGIGIAFCAKPIVRVQAPYQITEPDLYKVIEILDEVGK.

Catalysis depends on Asp11, which acts as the Nucleophile. Asp11 and Asp13 together coordinate Mg(2+). Asp13 (proton donor) is an active-site residue. Substrate is bound by residues Glu20, Arg56, 99–100 (SG), and Lys144. Asp167 is a Mg(2+) binding site. Residue Asn170 coordinates substrate.

Belongs to the HAD-like hydrolase superfamily. SerB family. Requires Mg(2+) as cofactor.

It catalyses the reaction O-phospho-L-serine + H2O = L-serine + phosphate. It carries out the reaction O-phospho-D-serine + H2O = D-serine + phosphate. Its pathway is amino-acid biosynthesis; L-serine biosynthesis; L-serine from 3-phospho-D-glycerate: step 3/3. This chain is Phosphoserine phosphatase, found in Streptococcus thermophilus (strain ATCC BAA-250 / LMG 18311).